A 512-amino-acid polypeptide reads, in one-letter code: ETS translocation variant 3 (512 aa).

Residues 35 to 116 (IQLWHFILEL…KGKRFTYKFN (82 aa)) constitute a DNA-binding region (ETS). The disordered stretch occupies residues 138 to 196 (QSAPPVPTASSRFHFPPLDTHSPTSDVQPGRFSASSLTASGQESSNGTDRKAELSXLED). Phosphoserine is present on residues Ser-139, Ser-159, and Ser-315. Over residues 158–184 (HSPTSDVQPGRFSASSLTASGQESSNG) the composition is skewed to polar residues. Residues 341–512 (QFSIKLQPPP…QGLATAAADA (172 aa)) form a disordered region. Basic and acidic residues predominate over residues 380–406 (IKVEPASEKDAESLRQSAREKEEHTXE). A Glycyl lysine isopeptide (Lys-Gly) (interchain with G-Cter in SUMO2) cross-link involves residue Lys-381. Lys-388 carries the post-translational modification N6-acetyllysine; alternate. A Glycyl lysine isopeptide (Lys-Gly) (interchain with G-Cter in SUMO2); alternate cross-link involves residue Lys-388. The span at 443-452 (EPLEVTEDIE) shows a compositional bias: acidic residues. Composition is skewed to basic and acidic residues over residues 453 to 468 (DRPG…KEDA) and 479 to 491 (RWND…ELSK).

This sequence belongs to the ETS family.

It is found in the nucleus. Functionally, transcriptional repressor that contribute to growth arrest during terminal macrophage differentiation by repressing target genes involved in Ras-dependent proliferation. Represses MMP1 promoter activity. The protein is ETS translocation variant 3 (ETV3) of Ateles geoffroyi (Black-handed spider monkey).